Reading from the N-terminus, the 2581-residue chain is Highly reducing polyketide synthase sorA (2581 aa).

The region spanning 14-436 (SEPIAIIGMS…GSNAHIILED (423 aa)) is the Ketosynthase family 3 (KS3) domain. Active-site for beta-ketoacyl synthase activity residues include C187, H322, and H359. A malonyl-CoA:ACP transacylase (MAT) domain region spans residues 574-868 (VFTGQGAQWN…VVEVGPHTAL (295 aa)). Positions 966–1103 (HDLLGSIVEG…GLVSVELGES (138 aa)) are N-terminal hotdog fold. The interval 966-1270 (HDLLGSIVEG…GFSYQSLGRS (305 aa)) is dehydratase (DH) domain. Residues 966 to 1273 (HDLLGSIVEG…YQSLGRSTSL (308 aa)) enclose the PKS/mFAS DH domain. H998 acts as the Proton acceptor; for dehydratase activity in catalysis. A C-terminal hotdog fold region spans residues 1119–1273 (TRRILPADLF…YQSLGRSTSL (155 aa)). D1184 (proton donor; for dehydratase activity) is an active-site residue. The methyltransferase (CMet) domain stretch occupies residues 1461 to 1568 (LEVGAATGAI…SSLLKPGGTL (108 aa)). Residues 1873–2184 (LKPDLLVFGD…AGDQIGKVVL (312 aa)) form an enoyl reductase (ER)domain region. Positions 2207–2389 (VSYLIVGGSG…AVSIDLSVVN (183 aa)) are ketoreductase (KR) domain. The 78-residue stretch at 2497–2574 (DAVRVVGTAI…QLAIDVVDRS (78 aa)) folds into the Carrier domain. An O-(pantetheine 4'-phosphoryl)serine modification is found at S2534.

Its pathway is secondary metabolite biosynthesis. Functionally, highly reducing polyketide synthase; part of the gene cluster that mediates the biosynthesis of sorbicillinoids, a diverse group of yellow secondary metabolites that restrict growth of competing pathogenic fungi but not of bacteria. Sorbicillinoids biosynthesis requires the action of two PKSs. SorA iteratively combines three acetyl units and the growing chain is modified by the ketoacyl reductase subunit, and optional by the enoyl reductase subunit in the second cycle. The polyketide is then handed over to the PKS SorB, which adds three more acetyl units, and two methyl groups. SorB releases an aldehyde, which undergoes spontaneous cyclization resulting in the formation of sorbicillin or 2',3'-dihydrosorbicillin. The monooxygenase sorC oxidizes sorbicillin and 2',3'-dihydrosorbicillin to 2',3'-dihydrosorbicillinol and sorbicillinol, respectively. The oxidoreductase sorD further converts sorbicillinol into oxosorbicillinol. Sorbicillinol is the building block for the other sorbicillinoids such as disorbicillinol, bisvertinolon, and dihydrobisvertinolone. In Penicillium rubens (strain ATCC 28089 / DSM 1075 / NRRL 1951 / Wisconsin 54-1255) (Penicillium chrysogenum), this protein is Highly reducing polyketide synthase sorA.